A 237-amino-acid chain; its full sequence is Ubiquinone biosynthesis O-methyltransferase (237 aa).

Residues arginine 39, glycine 59, aspartate 80, and methionine 124 each coordinate S-adenosyl-L-methionine.

The protein belongs to the methyltransferase superfamily. UbiG/COQ3 family.

The enzyme catalyses a 3-demethylubiquinol + S-adenosyl-L-methionine = a ubiquinol + S-adenosyl-L-homocysteine + H(+). It catalyses the reaction a 3-(all-trans-polyprenyl)benzene-1,2-diol + S-adenosyl-L-methionine = a 2-methoxy-6-(all-trans-polyprenyl)phenol + S-adenosyl-L-homocysteine + H(+). The protein operates within cofactor biosynthesis; ubiquinone biosynthesis. Functionally, O-methyltransferase that catalyzes the 2 O-methylation steps in the ubiquinone biosynthetic pathway. The polypeptide is Ubiquinone biosynthesis O-methyltransferase (Vibrio atlanticus (strain LGP32) (Vibrio splendidus (strain Mel32))).